The primary structure comprises 214 residues: RNA pyrophosphohydrolase (214 aa).

One can recognise a Nudix hydrolase domain in the interval Gly-6–Thr-149. The Nudix box motif lies at Gly-38–Gly-59.

This sequence belongs to the Nudix hydrolase family. RppH subfamily. The cofactor is a divalent metal cation.

In terms of biological role, accelerates the degradation of transcripts by removing pyrophosphate from the 5'-end of triphosphorylated RNA, leading to a more labile monophosphorylated state that can stimulate subsequent ribonuclease cleavage. The chain is RNA pyrophosphohydrolase from Burkholderia orbicola (strain MC0-3).